The sequence spans 167 residues: Ribosome maturation factor RimM (167 aa).

Residues 94 to 165 form the PRC barrel domain; sequence EHEYYYSDII…TIKITPMEGL (72 aa).

Belongs to the RimM family. As to quaternary structure, binds ribosomal protein uS19.

Its subcellular location is the cytoplasm. In terms of biological role, an accessory protein needed during the final step in the assembly of 30S ribosomal subunit, possibly for assembly of the head region. Essential for efficient processing of 16S rRNA. May be needed both before and after RbfA during the maturation of 16S rRNA. It has affinity for free ribosomal 30S subunits but not for 70S ribosomes. This Staphylococcus epidermidis (strain ATCC 35984 / DSM 28319 / BCRC 17069 / CCUG 31568 / BM 3577 / RP62A) protein is Ribosome maturation factor RimM.